The sequence spans 102 residues: Small ribosomal subunit protein uS10 (102 aa).

Belongs to the universal ribosomal protein uS10 family. Part of the 30S ribosomal subunit.

Functionally, involved in the binding of tRNA to the ribosomes. The chain is Small ribosomal subunit protein uS10 from Ligilactobacillus salivarius (strain UCC118) (Lactobacillus salivarius).